We begin with the raw amino-acid sequence, 291 residues long: Phytanoyl-CoA dioxygenase domain-containing protein 1 (291 aa).

Residue Thr55 is modified to Phosphothreonine. Residues Lys102, Met141, 156–158 (HQD), and Trp174 each bind 2-oxoglutarate. Fe cation contacts are provided by His156 and Asp158. His246 lines the Fe cation pocket. The 2-oxoglutarate site is built by Ser248 and Arg257.

The protein belongs to the PhyH family. PHYHD1 subfamily. Fe cation serves as cofactor.

2-oxoglutarate(2OG)-dependent dioxygenase that catalyzes the conversion of 2-oxoglutarate to succinate and CO(2) in an iron-dependent manner. However, does not couple 2OG turnover to the hydroxylation of acyl-coenzyme A derivatives, implying that it is not directly involved in phytanoyl coenzyme-A metabolism. Does not show detectable activity towards fatty acid CoA thioesters. This chain is Phytanoyl-CoA dioxygenase domain-containing protein 1 (Phyhd1), found in Rattus norvegicus (Rat).